Here is a 321-residue protein sequence, read N- to C-terminus: Mitochondrial thiamine pyrophosphate carrier 1 (321 aa).

A run of 6 helical transmembrane segments spans residues 12–28, 91–107, 126–146, 184–200, 221–237, and 284–301; these read GTRRQVVLAGGIAGLVS, LMYVCYGVIQFSAYRTT, FVAGATAGGLATASTYPLDLL, AAVGQIVPYMGLFFATY, AAGVIASVSSKTVMFPL, and GLTVSLFKAAPASAVTMW. Solcar repeat units lie at residues 12-110, 120-206, and 214-309; these read GTRR…TTQA, PPSA…LRPP, and PFGS…SLRL.

Belongs to the mitochondrial carrier (TC 2.A.29) family.

The protein resides in the mitochondrion inner membrane. Mitochondrial transporter that mediates uptake of thiamine pyrophosphate (ThPP) into mitochondria. This Aspergillus niger (strain ATCC MYA-4892 / CBS 513.88 / FGSC A1513) protein is Mitochondrial thiamine pyrophosphate carrier 1 (tpc1).